The primary structure comprises 214 residues: ER lumen protein-retaining receptor 3 (214 aa).

Over 1 to 4 the chain is Lumenal; sequence MNIF. A helical membrane pass occupies residues 5-24; the sequence is RILGDVSHLLAIIILLLKMW. Residues 25–32 lie on the Cytoplasmic side of the membrane; the sequence is KSKSCAGI. The helical transmembrane segment at 33–52 threads the bilayer; the sequence is SGKSQLLFALVFTTRYLDLF. Residues 47 to 48 are interaction with the K-D-E-L motif on target proteins; that stretch reads RY. Topologically, residues 53–58 are lumenal; the sequence is TVFISP. Residues 59-79 form a helical membrane-spanning segment; the sequence is YNTVMKIIFLACAYVTVYLIY. The Cytoplasmic segment spans residues 80–92; sequence GKLRKSYDSENDT. A helical transmembrane segment spans residues 93–110; the sequence is FRLEFLLVPVIGLSFLEN. Residues 111–116 lie on the Lumenal side of the membrane; sequence YEFTPL. The chain crosses the membrane as a helical span at residues 117 to 135; it reads EILWTFSIYLESVAILPQL. The Cytoplasmic portion of the chain corresponds to 136 to 149; that stretch reads FMISKTGEAESITT. The helical transmembrane segment at 150–168 threads the bilayer; sequence HYLFFLGLYRVLYLANWIW. The interval 159–169 is interaction with the K-D-E-L motif on target proteins; the sequence is RVLYLANWIWR. The Lumenal portion of the chain corresponds to 169–178; the sequence is RYHTEKFYDQ. Residues 179–199 traverse the membrane as a helical segment; it reads IAVVSGVVQTIFYFDFFYLYV. The Cytoplasmic segment spans residues 200 to 214; that stretch reads TKVLKGKKLSLPMPV. The tract at residues 204-207 is important for recycling of cargo proteins with the sequence motif K-D-E-L from the Golgi to the endoplasmic reticulum; the sequence is KGKK.

Belongs to the ERD2 family.

It is found in the endoplasmic reticulum membrane. The protein localises to the golgi apparatus membrane. The protein resides in the cytoplasmic vesicle. Its subcellular location is the COPI-coated vesicle membrane. Receptor for the C-terminal sequence motif K-D-E-L that is present on endoplasmic reticulum resident proteins and that mediates their recycling from the Golgi back to the endoplasmic reticulum. The chain is ER lumen protein-retaining receptor 3 (kdelr3) from Xenopus laevis (African clawed frog).